A 53-amino-acid polypeptide reads, in one-letter code: UPF0337 protein LJ_0034.1 (53 aa).

Positions 27 to 53 (AREVEGKAQQAKGKVKSKATEVKEDLE) are disordered. Basic and acidic residues predominate over residues 44 to 53 (KATEVKEDLE).

The protein belongs to the UPF0337 (CsbD) family.

In Lactobacillus johnsonii (strain CNCM I-12250 / La1 / NCC 533), this protein is UPF0337 protein LJ_0034.1.